Consider the following 1036-residue polypeptide: Isoleucine--tRNA ligase (1036 aa).

Residues 46–56 carry the 'HIGH' region motif; it reads PFATGLPHYGH. Residues 589 to 593 carry the 'KMSKS' region motif; that stretch reads KMSKR. Position 592 (Lys592) interacts with ATP.

This sequence belongs to the class-I aminoacyl-tRNA synthetase family. IleS type 2 subfamily. Monomer. Zn(2+) is required as a cofactor.

The protein localises to the cytoplasm. The enzyme catalyses tRNA(Ile) + L-isoleucine + ATP = L-isoleucyl-tRNA(Ile) + AMP + diphosphate. Its function is as follows. Catalyzes the attachment of isoleucine to tRNA(Ile). As IleRS can inadvertently accommodate and process structurally similar amino acids such as valine, to avoid such errors it has two additional distinct tRNA(Ile)-dependent editing activities. One activity is designated as 'pretransfer' editing and involves the hydrolysis of activated Val-AMP. The other activity is designated 'posttransfer' editing and involves deacylation of mischarged Val-tRNA(Ile). The protein is Isoleucine--tRNA ligase of Chlamydia trachomatis serovar L2 (strain ATCC VR-902B / DSM 19102 / 434/Bu).